Reading from the N-terminus, the 179-residue chain is Coiled-coil domain-containing protein 32 (179 aa).

The stretch at 75–98 forms a coiled coil; that stretch reads EVYLASLEKKLRRIKGLNEEVTSK. Positions 157 to 179 are disordered; that stretch reads FLIPPESQAEKPEARDEPAAAEQ. Residues 164–179 show a composition bias toward basic and acidic residues; sequence QAEKPEARDEPAAAEQ.

As to quaternary structure, interacts with AP2S1; the interaction is direct and mediates association with adaptor protein complex 2 (AP-2).

It is found in the membrane. It localises to the coated pit. Its function is as follows. Regulates clathrin-mediated endocytsois of cargos such as transferrin probably through the association and modulation of adaptor protein complex 2 (AP-2). Has a role in ciliogenesis. Required for proper cephalic and left/right axis development. This chain is Coiled-coil domain-containing protein 32 (Ccdc32), found in Rattus norvegicus (Rat).